A 189-amino-acid polypeptide reads, in one-letter code: MKKIVLYGGQFNPIHTAHMIVASEVFHELQPDEFYFLPSFMSPLKKHNNFIDVQHRLTMIQMIIDELGFGDICDDEIKRGGQSYTYDTIKAFKEQHKDSELYFVIGTDQYNQLEKWYQIEYLKEMVTFVVVNRDKNSQNVDNAMIAIQIPRVDISSTMIRQRVSEGKSIQVLVPKSVENYIKGEGLYEH.

This sequence belongs to the NadD family.

It carries out the reaction nicotinate beta-D-ribonucleotide + ATP + H(+) = deamido-NAD(+) + diphosphate. Its pathway is cofactor biosynthesis; NAD(+) biosynthesis; deamido-NAD(+) from nicotinate D-ribonucleotide: step 1/1. Its function is as follows. Catalyzes the reversible adenylation of nicotinate mononucleotide (NaMN) to nicotinic acid adenine dinucleotide (NaAD). This chain is Probable nicotinate-nucleotide adenylyltransferase, found in Staphylococcus aureus (strain bovine RF122 / ET3-1).